Here is a 150-residue protein sequence, read N- to C-terminus: Large ribosomal subunit protein bL9 (150 aa).

This sequence belongs to the bacterial ribosomal protein bL9 family.

In terms of biological role, binds to the 23S rRNA. The polypeptide is Large ribosomal subunit protein bL9 (Alcanivorax borkumensis (strain ATCC 700651 / DSM 11573 / NCIMB 13689 / SK2)).